We begin with the raw amino-acid sequence, 491 residues long: Glutamyl-tRNA(Gln) amidotransferase subunit A (491 aa).

Catalysis depends on charge relay system residues Lys-79 and Ser-154. The active-site Acyl-ester intermediate is the Ser-178.

Belongs to the amidase family. GatA subfamily. Heterotrimer of A, B and C subunits.

It carries out the reaction L-glutamyl-tRNA(Gln) + L-glutamine + ATP + H2O = L-glutaminyl-tRNA(Gln) + L-glutamate + ADP + phosphate + H(+). Allows the formation of correctly charged Gln-tRNA(Gln) through the transamidation of misacylated Glu-tRNA(Gln) in organisms which lack glutaminyl-tRNA synthetase. The reaction takes place in the presence of glutamine and ATP through an activated gamma-phospho-Glu-tRNA(Gln). This is Glutamyl-tRNA(Gln) amidotransferase subunit A from Natranaerobius thermophilus (strain ATCC BAA-1301 / DSM 18059 / JW/NM-WN-LF).